Here is a 444-residue protein sequence, read N- to C-terminus: Protein CPn_0808/CP_1063/CPj0808/CpB0837 (444 aa).

The segment covering 1–13 (MTSGVSGSSSQDP) has biased composition (polar residues). The interval 1–124 (MTSGVSGSSS…NNYDSPSLPT (124 aa)) is disordered. Over residues 15–24 (LAAQLAQSSQ) the composition is skewed to low complexity. A compositionally biased stretch (polar residues) spans 25–42 (KAGNAQSGHDTKNVTKQG). The segment covering 77 to 86 (SKGEKSEKSG) has biased composition (basic and acidic residues). Residues 88 to 103 (SKSSTSVASASETATA) are compositionally biased toward low complexity. Residues 113-124 (RQNNYDSPSLPT) show a composition bias toward polar residues.

It belongs to the chlamydial CPn_0808/CT_579/TC_0868 family.

The chain is Protein CPn_0808/CP_1063/CPj0808/CpB0837 from Chlamydia pneumoniae (Chlamydophila pneumoniae).